Here is a 151-residue protein sequence, read N- to C-terminus: Putative coiled-coil-helix-coiled-coil-helix domain-containing protein CHCHD2P9, mitochondrial (151 aa).

The N-terminal 9 residues, 1–9 (MPRGSRSRT), are a transit peptide targeting the mitochondrion. Disordered regions lie at residues 1–50 (MPRG…AAAP) and 75–110 (TQGH…PAQQ). The segment covering 10-26 (SRMAPPASRAPQMRAAP) has biased composition (low complexity). Pro residues predominate over residues 27–38 (RPAPVAQPPAAA). 2 stretches are compositionally biased toward low complexity: residues 39–50 (PPSAVGSSAAAP) and 100–110 (QEPQGTQPAQQ). The region spanning 111-151 (QQPCFYGIKQFLECAQNQGDIKLCEDFSKVLKQCRLAKGLA) is the CHCH domain. 2 consecutive short sequence motifs (cx9C motif) follow at residues 114 to 124 (CFYGIKQFLEC) and 134 to 144 (CEDFSKVLKQC). 2 disulfide bridges follow: Cys-114–Cys-144 and Cys-124–Cys-134.

Its subcellular location is the mitochondrion. In Homo sapiens (Human), this protein is Putative coiled-coil-helix-coiled-coil-helix domain-containing protein CHCHD2P9, mitochondrial (CHCHD2P9).